Reading from the N-terminus, the 122-residue chain is MAAKPGELMGICSSYQAVMPHFVCLADEFPQPVRPAKLPKGRGRLRRPRQSRFKTQPVTFDEIQEVEEEGVSPMEEEKAKKSFLQSLECLRRSTQSLSLQREQLSSCKLRNSLDSSDSDSAL.

The residue at position 55 (Thr55) is a Phosphothreonine. Phosphoserine occurs at positions 72, 86, 96, 112, and 118.

It localises to the cytoplasm. This is an uncharacterized protein from Homo sapiens (Human).